Here is a 564-residue protein sequence, read N- to C-terminus: MFS-type transporter dmxR4 (564 aa).

The interval 1-61 (MSSERPDGSA…PAKEAPAKPA (61 aa)) is disordered. Positions 25–44 (TDSSRTSNDASQTSQDTAVQ) are enriched in polar residues. Residues 47–57 (PPKEAPAKEAP) show a composition bias toward basic and acidic residues. The next 5 helical transmembrane spans lie at 71–91 (IALLLGLILMSMFLVALDRSI), 106–126 (AGDIGWYGSAYLLTCCSFQLL), 138–158 (TVFVANLLLFEVASAICGAAP), 169–189 (LAGIGAAGIFAGTIIAMVFLI), and 199–219 (GLFGAVFGITSISGPLIGGGF). N-linked (GlcNAc...) asparagine glycosylation is present at Asn-222. 7 consecutive transmembrane segments (helical) span residues 227-247 (WCFYINLPIGGVALIAIALWM), 265-285 (GLDLLGTAVFIPCIICLLLAL), 299-319 (IIALLVVFSVTFVVYAALQAF), 348-368 (GVHLLPVMISMIVGSVTGGFF), 376-396 (SPLAVTGSTIMTIGAALIYTF), 405-425 (WIGSLILYGIGLGWSFQAPNL), and 438-458 (SALALIMFVGLLAQAVFVSVG). Asn-469 carries N-linked (GlcNAc...) asparagine glycosylation. 2 consecutive transmembrane segments (helical) span residues 470-490 (LSWIPGFTASELTSSGAVSFL) and 512-532 (VFMIGLVLCAVCVPGLASMEW). The segment at 534–564 (SVKSRGSWDEKPAAKPTDKPTEEKKVPPEAV) is disordered. The segment covering 539 to 564 (GSWDEKPAAKPTDKPTEEKKVPPEAV) has biased composition (basic and acidic residues).

It belongs to the major facilitator superfamily. TCR/Tet family.

It is found in the membrane. Functionally, MFS-type transporter; part of the gene cluster that mediates the biosynthesis of the dimeric xanthones cryptosporioptides. The sequence is that of MFS-type transporter dmxR4 from Cryptosporiopsis sp. (strain 8999).